We begin with the raw amino-acid sequence, 168 residues long: Large ribosomal subunit protein uL10 (168 aa).

This sequence belongs to the universal ribosomal protein uL10 family. Part of the ribosomal stalk of the 50S ribosomal subunit. The N-terminus interacts with L11 and the large rRNA to form the base of the stalk. The C-terminus forms an elongated spine to which L12 dimers bind in a sequential fashion forming a multimeric L10(L12)X complex.

Its function is as follows. Forms part of the ribosomal stalk, playing a central role in the interaction of the ribosome with GTP-bound translation factors. The polypeptide is Large ribosomal subunit protein uL10 (Laribacter hongkongensis (strain HLHK9)).